The following is a 242-amino-acid chain: Pyridoxine 5'-phosphate synthase (242 aa).

Residue Asn-8 coordinates 3-amino-2-oxopropyl phosphate. 10–11 lines the 1-deoxy-D-xylulose 5-phosphate pocket; sequence DH. Position 19 (Arg-19) interacts with 3-amino-2-oxopropyl phosphate. Catalysis depends on His-44, which acts as the Proton acceptor. Residues Arg-46 and His-51 each coordinate 1-deoxy-D-xylulose 5-phosphate. Glu-71 functions as the Proton acceptor in the catalytic mechanism. Position 101 (Thr-101) interacts with 1-deoxy-D-xylulose 5-phosphate. The Proton donor role is filled by His-193. 3-amino-2-oxopropyl phosphate contacts are provided by residues Gly-194 and 215–216; that span reads GF.

Belongs to the PNP synthase family. As to quaternary structure, homooctamer; tetramer of dimers.

The protein localises to the cytoplasm. The enzyme catalyses 3-amino-2-oxopropyl phosphate + 1-deoxy-D-xylulose 5-phosphate = pyridoxine 5'-phosphate + phosphate + 2 H2O + H(+). The protein operates within cofactor biosynthesis; pyridoxine 5'-phosphate biosynthesis; pyridoxine 5'-phosphate from D-erythrose 4-phosphate: step 5/5. Its function is as follows. Catalyzes the complicated ring closure reaction between the two acyclic compounds 1-deoxy-D-xylulose-5-phosphate (DXP) and 3-amino-2-oxopropyl phosphate (1-amino-acetone-3-phosphate or AAP) to form pyridoxine 5'-phosphate (PNP) and inorganic phosphate. The polypeptide is Pyridoxine 5'-phosphate synthase (Elusimicrobium minutum (strain Pei191)).